Reading from the N-terminus, the 84-residue chain is ATP synthase subunit c (84 aa).

Transmembrane regions (helical) follow at residues 9–29 (IIGA…GFAI) and 54–74 (IVAG…LLFI).

Belongs to the ATPase C chain family. In terms of assembly, F-type ATPases have 2 components, F(1) - the catalytic core - and F(0) - the membrane proton channel. F(1) has five subunits: alpha(3), beta(3), gamma(1), delta(1), epsilon(1). F(0) has three main subunits: a(1), b(2) and c(10-14). The alpha and beta chains form an alternating ring which encloses part of the gamma chain. F(1) is attached to F(0) by a central stalk formed by the gamma and epsilon chains, while a peripheral stalk is formed by the delta and b chains.

It is found in the cell inner membrane. Its function is as follows. F(1)F(0) ATP synthase produces ATP from ADP in the presence of a proton or sodium gradient. F-type ATPases consist of two structural domains, F(1) containing the extramembraneous catalytic core and F(0) containing the membrane proton channel, linked together by a central stalk and a peripheral stalk. During catalysis, ATP synthesis in the catalytic domain of F(1) is coupled via a rotary mechanism of the central stalk subunits to proton translocation. Functionally, key component of the F(0) channel; it plays a direct role in translocation across the membrane. A homomeric c-ring of between 10-14 subunits forms the central stalk rotor element with the F(1) delta and epsilon subunits. This chain is ATP synthase subunit c, found in Glaesserella parasuis serovar 5 (strain SH0165) (Haemophilus parasuis).